The primary structure comprises 291 residues: Ribosomal protein L11 methyltransferase (291 aa).

Residues Thr-136, Gly-159, Asp-181, and Asn-228 each coordinate S-adenosyl-L-methionine.

Belongs to the methyltransferase superfamily. PrmA family.

It is found in the cytoplasm. It carries out the reaction L-lysyl-[protein] + 3 S-adenosyl-L-methionine = N(6),N(6),N(6)-trimethyl-L-lysyl-[protein] + 3 S-adenosyl-L-homocysteine + 3 H(+). Functionally, methylates ribosomal protein L11. The chain is Ribosomal protein L11 methyltransferase from Rhizobium meliloti (strain 1021) (Ensifer meliloti).